We begin with the raw amino-acid sequence, 269 residues long: Putative pyruvate, phosphate dikinase regulatory protein (269 aa).

G147 to T154 contacts ADP.

Belongs to the pyruvate, phosphate/water dikinase regulatory protein family. PDRP subfamily.

The enzyme catalyses N(tele)-phospho-L-histidyl/L-threonyl-[pyruvate, phosphate dikinase] + ADP = N(tele)-phospho-L-histidyl/O-phospho-L-threonyl-[pyruvate, phosphate dikinase] + AMP + H(+). It catalyses the reaction N(tele)-phospho-L-histidyl/O-phospho-L-threonyl-[pyruvate, phosphate dikinase] + phosphate + H(+) = N(tele)-phospho-L-histidyl/L-threonyl-[pyruvate, phosphate dikinase] + diphosphate. Its function is as follows. Bifunctional serine/threonine kinase and phosphorylase involved in the regulation of the pyruvate, phosphate dikinase (PPDK) by catalyzing its phosphorylation/dephosphorylation. The sequence is that of Putative pyruvate, phosphate dikinase regulatory protein from Clostridium botulinum (strain 657 / Type Ba4).